A 684-amino-acid chain; its full sequence is 77 kDa membrane protein (684 aa).

An N-terminal signal peptide occupies residues 1–30 (MKFKSLITTTLALGVLASTGANFNNNEASA). MAP repeat units lie at residues 45 to 154 (GYSK…EDKK), 156 to 265 (DKAN…ENKA), 266 to 374 (KRNY…KADR), 375 to 474 (YVPY…TGTK), 475 to 584 (AKAD…KKNN), and 586 to 684 (SNNV…ELKF).

It localises to the cell membrane. In terms of biological role, binds various plasma and ECM-proteins. In Staphylococcus aureus (strain COL), this protein is 77 kDa membrane protein.